The chain runs to 83 residues: Kunitz-type serine protease inhibitor nigrescinin-3 (83 aa).

The signal sequence occupies residues 1–24; sequence MSSGGLLLLLGLLTLWEALTPVSS. In terms of domain architecture, BPTI/Kunitz inhibitor spans 31-81; that stretch reads CELPEDSGPCKGLFHVFYYNSDQNQRLEFIYGGCYGNANNFKTIEECKRTC. Cystine bridges form between cysteine 31–cysteine 81 and cysteine 40–cysteine 64.

It belongs to the venom Kunitz-type family. As to expression, expressed by the venom gland.

Its subcellular location is the secreted. Its function is as follows. Serine protease inhibitor. In Cryptophis nigrescens (Eastern small-eyed snake), this protein is Kunitz-type serine protease inhibitor nigrescinin-3.